Here is a 763-residue protein sequence, read N- to C-terminus: MHTGGETSACKPSSVRLAPSFSFHAAGLQMAAQMPHSHQYSDRRQPNISDQQVSALSYSDQIQQPLTNQVMPDIVMLQRRMPQTFRDPATAPLRKLSVDLIKTYKHINEVYYAKKKRRHQQGQGDDSSHKKERKVYNDGYDDDNYDYIVKNGEKWMDRYEIDSLIGKGSFGQVVKAYDRVEQEWVAIKIIKNKKAFLNQAQIEVRLLELMNKHDTEMKYYIVHLKRHFMFRNHLCLVFEMLSYNLYDLLRNTNFRGVSLNLTRKFAQQMCTALLFLATPELSIIHCDLKPENILLCNPKRSAIKIVDFGSSCQLGQRIYQYIQSRFYRSPEVLLGMPYDLAIDMWSLGCILVEMHTGEPLFSGANEVDQMNKIVEVLGIPPAHILDQAPKARKFFEKLPDGTWSLKKTKDGKREYKPPGTRKLHNILGVETGGPGGRRAGESGHTVADYLKFKDLILRMLDYDPKTRIQPYYALQHSFFKKTADEGTNTSNSVSTSPAMEQSQSSGTTSSTSSSSGGSSGTSNSGRARSDPTHQHRHSGGHFAAAVQAMDCETHSPQVRQQFPAPLGWSGTEAPTQVTVETHPVQETTFHVAPQQNALHHHHGNSSHHHHHHHHHHHHHGQQALGNRTRPRVYNSPTNSSSTQDSMEVGHSHHSMTSLSSSTTSSSTSSSSTGNQGNQAYQNRPVAANTLDFGQNGAMDVNLTVYSNPRQETGIAGHPTYQFSANTGPAHYMTEGHLTMRQGADREESPMTGVCVQQSPVASS.

Phosphoserine is present on Ser14. The disordered stretch occupies residues 33–56 (QMPHSHQYSDRRQPNISDQQVSAL). Residues 46 to 56 (PNISDQQVSAL) are compositionally biased toward polar residues. Position 111 is a phosphotyrosine; by autocatalysis (Tyr111). Residues 115–136 (KKRRHQQGQGDDSSHKKERKVY) form a disordered region. Residues 117 to 134 (RRHQQGQGDDSSHKKERK) carry the Bipartite nuclear localization signal motif. Tyr140 carries the phosphotyrosine; by autocatalysis modification. Phosphotyrosine is present on Tyr145. Tyr159 bears the Phosphotyrosine; by autocatalysis mark. The 321-residue stretch at 159–479 (YEIDSLIGKG…PYYALQHSFF (321 aa)) folds into the Protein kinase domain. Residue 165–173 (IGKGSFGQV) participates in ATP binding. Phosphotyrosine; by autocatalysis is present on Tyr177. Lys188 contacts ATP. Tyr219 carries the post-translational modification Phosphotyrosine; by autocatalysis. 238–241 (FEML) lines the ATP pocket. Asp287 functions as the Proton acceptor in the catalytic mechanism. Ser310 is subject to Phosphoserine; by autocatalysis. Tyr319 and Tyr321 each carry phosphotyrosine; by autocatalysis. A Phosphothreonine; by autocatalysis modification is found at Thr402. Positions 408–442 (TKDGKREYKPPGTRKLHNILGVETGGPGGRRAGES) are disordered. Tyr449 is modified (phosphotyrosine; by autocatalysis). Over residues 485-501 (EGTNTSNSVSTSPAMEQ) the composition is skewed to polar residues. Disordered stretches follow at residues 485-540 (EGTN…HSGG), 596-679 (NALH…GNQA), and 744-763 (DREE…VASS). Low complexity predominate over residues 502-525 (SQSSGTTSSTSSSSGGSSGTSNSG). A phosphoserine mark is found at Ser529 and Ser538. The interval 595–625 (QNALHHHHGNSSHHHHHHHHHHHHHGQQALG) is histidine-rich domain (HRD). A compositionally biased stretch (basic residues) spans 598–620 (LHHHHGNSSHHHHHHHHHHHHHG). Over residues 634–645 (NSPTNSSSTQDS) the composition is skewed to polar residues. A compositionally biased stretch (low complexity) spans 654–672 (SMTSLSSSTTSSSTSSSST). A phosphoserine mark is found at Ser748 and Ser758. The segment covering 754–763 (CVQQSPVASS) has biased composition (polar residues).

Belongs to the protein kinase superfamily. CMGC Ser/Thr protein kinase family. MNB/DYRK subfamily. In terms of assembly, interacts with RAD54L2/ARIP4. Interacts with CRY2. Interacts with RANBP9. Interacts with WDR68. Interacts with SIRT1. Post-translationally, can also autophosphorylate on serine and threonine residues (in vitro). Autophosphorylated on numerous tyrosine residues. In terms of tissue distribution, detected in brain (at protein level). Ubiquitous.

It localises to the nucleus speckle. It carries out the reaction L-seryl-[protein] + ATP = O-phospho-L-seryl-[protein] + ADP + H(+). The enzyme catalyses L-threonyl-[protein] + ATP = O-phospho-L-threonyl-[protein] + ADP + H(+). The catalysed reaction is L-tyrosyl-[protein] + ATP = O-phospho-L-tyrosyl-[protein] + ADP + H(+). It catalyses the reaction [DNA-directed RNA polymerase] + ATP = phospho-[DNA-directed RNA polymerase] + ADP + H(+). With respect to regulation, inhibited by RANBP9. Inhibited by harmine, leucettamine B and leucettine L41. Its function is as follows. Dual-specificity kinase which possesses both serine/threonine and tyrosine kinase activities. Exhibits a substrate preference for proline at position P+1 and arginine at position P-3. Plays an important role in double-strand breaks (DSBs) repair following DNA damage. Mechanistically, phosphorylates RNF169 and increases its ability to block accumulation of TP53BP1 at the DSB sites thereby promoting homologous recombination repair (HRR). Also acts as a positive regulator of transcription by acting as a CTD kinase that mediates phosphorylation of the CTD (C-terminal domain) of the large subunit of RNA polymerase II (RNAP II) POLR2A. May play a role in a signaling pathway regulating nuclear functions of cell proliferation. Modulates alternative splicing by phosphorylating the splice factor SRSF6. Has pro-survival function and negatively regulates the apoptotic process. Promotes cell survival upon genotoxic stress through phosphorylation of SIRT1. This in turn inhibits p53/TP53 activity and apoptosis. Phosphorylates SEPTIN4, SEPTIN5 and SF3B1 at 'Thr-434'. The sequence is that of Dual specificity tyrosine-phosphorylation-regulated kinase 1A (Dyrk1a) from Rattus norvegicus (Rat).